Consider the following 444-residue polypeptide: Phosphoribosylamine--glycine ligase (444 aa).

Residues 109-324 form the ATP-grasp domain; sequence RNLFKKYEID…FLDVCFAIAE (216 aa). 140–202 provides a ligand contact to ATP; sequence MTSLGKDVVV…EEKLVGVEFT (63 aa). Mg(2+) contacts are provided by Q282, E294, and N296. Positions 282, 294, and 296 each coordinate Mn(2+).

The protein belongs to the GARS family. Requires Mg(2+) as cofactor. Mn(2+) serves as cofactor.

It catalyses the reaction 5-phospho-beta-D-ribosylamine + glycine + ATP = N(1)-(5-phospho-beta-D-ribosyl)glycinamide + ADP + phosphate + H(+). It functions in the pathway purine metabolism; IMP biosynthesis via de novo pathway; N(1)-(5-phospho-D-ribosyl)glycinamide from 5-phospho-alpha-D-ribose 1-diphosphate: step 2/2. The protein is Phosphoribosylamine--glycine ligase of Methanococcus maripaludis (strain DSM 14266 / JCM 13030 / NBRC 101832 / S2 / LL).